We begin with the raw amino-acid sequence, 396 residues long: Phosphoglycerate kinase (396 aa).

Residues Asp-21–Asn-23, Arg-36, His-59–Lys-62, Arg-119, and Arg-156 each bind substrate. Residues Lys-206, Gly-294, Glu-325, and Gly-352–Ser-355 contribute to the ATP site.

Belongs to the phosphoglycerate kinase family. As to quaternary structure, monomer.

It localises to the cytoplasm. It catalyses the reaction (2R)-3-phosphoglycerate + ATP = (2R)-3-phospho-glyceroyl phosphate + ADP. Its pathway is carbohydrate degradation; glycolysis; pyruvate from D-glyceraldehyde 3-phosphate: step 2/5. This is Phosphoglycerate kinase from Staphylococcus aureus (strain USA300).